The primary structure comprises 224 residues: Prolactin-2C3 (224 aa).

The first 29 residues, 1-29 (MLPSSIQPCSWILLLLLVNSSLLWKNVAS), serve as a signal peptide directing secretion. N19 carries N-linked (GlcNAc...) asparagine glycosylation. C33 and C40 form a disulfide bridge. N-linked (GlcNAc...) asparagine glycosylation is found at N57, N75, and N88. Disulfide bonds link C87-C199 and C216-C224.

It belongs to the somatotropin/prolactin family. In terms of processing, N-glycosylated and sialylated. As to expression, expressed in placenta and hair follicles, with highest expression levels detected in the outer root sheath and no expression detected in bulb. Expressed in placenta, skin wounds, keratinocytes and weakly in embryonic fibroblasts. Expressed in brain, cerebellum and in Neuro-2a cell line. Not detected in liver, kidney, ovary, pituitary gland and brain.

It is found in the secreted. The protein localises to the endoplasmic reticulum. In terms of biological role, may have a role in embryonic development. It is likely to provide a growth stimulus to target cells in maternal and fetal tissues during the development of the embryo at mid-gestation. May play a role during wound healing and in the hair follicle cycle as a growth factor and/or an angiogenesis factor. May play a role in microvilli formation and cell proliferation of neuroblastoma cells. In Mus musculus (Mouse), this protein is Prolactin-2C3 (Prl2c3).